We begin with the raw amino-acid sequence, 890 residues long: Protein translocase subunit SecA (890 aa).

Residues Q86, 104-108 (GEGKT), and D493 contribute to the ATP site. A compositionally biased stretch (basic and acidic residues) spans 851–872 (EASHGDGDAKKAPVVKKEESGR). The tract at residues 851–873 (EASHGDGDAKKAPVVKKEESGRN) is disordered. 4 residues coordinate Zn(2+): C876, C878, C887, and C888.

This sequence belongs to the SecA family. In terms of assembly, monomer and homodimer. Part of the essential Sec protein translocation apparatus which comprises SecA, SecYEG and auxiliary proteins SecDF. Other proteins may also be involved. Zn(2+) is required as a cofactor.

The protein resides in the cell membrane. It localises to the cytoplasm. It carries out the reaction ATP + H2O + cellular proteinSide 1 = ADP + phosphate + cellular proteinSide 2.. Part of the Sec protein translocase complex. Interacts with the SecYEG preprotein conducting channel. Has a central role in coupling the hydrolysis of ATP to the transfer of proteins into and across the cell membrane, serving as an ATP-driven molecular motor driving the stepwise translocation of polypeptide chains across the membrane. This is Protein translocase subunit SecA from Alkaliphilus oremlandii (strain OhILAs) (Clostridium oremlandii (strain OhILAs)).